We begin with the raw amino-acid sequence, 253 residues long: MNAIILAAGFGSRLMPLTKDQPKCMVEYKNKKIIDYEIEALKSAGINEIAVVGGYLNDVLKNYLNKYDIEHFFINSKYDKTNMVHTFFCAKDFMLKCIEEKQDLIISYADIVYFQDCVQKLINAKEELAIVVDKSWCKLWSKRFANPLEDAETLKMTNGYIIELGKKANAYDEIEAQYIGLFKFSYQFLSEVIAFYEMLDRDILYDNKNFENMYMTSFLQALIEKYNNAKAVEIDGNWCEIDFMSDLEVQIEK.

It carries out the reaction N(5)-phospho-L-glutamine + CTP + H(+) = N(5)-(cytidine 5'-diphosphoramidyl)-L-glutamine + diphosphate. The protein operates within capsule biogenesis; capsule polysaccharide biosynthesis. Its function is as follows. Involved in the biosynthesis of the O-methyl phosphoramidate (MeOPN) group found on the capsular polysaccharide (CPS) of C.jejuni. Catalyzes the formation of CDP-L-glutamine from CTP and L-glutamine phosphate. In the presence of MnCTP, catalyzes the displacement of pyrophosphate from CTP using phosphoramidate, methyl phosphate, methyl phosphonate, phosphate, arsenate, ethanolamine phosphate, (R/S)-glycerol-1-phosphate, glycerol-2-phosphate, serinol phosphate, L-serine phosphate and 3-phospho-D-glycerate as substrate in addition to L-glutamine phosphate. The polypeptide is CTP:phosphoglutamine cytidylyltransferase (Campylobacter jejuni subsp. jejuni serotype O:2 (strain ATCC 700819 / NCTC 11168)).